Consider the following 522-residue polypeptide: Sugar carrier protein A (522 aa).

Residues 1–22 (MAGGSLAPAGVAKERAEQYQGK) are Cytoplasmic-facing. 12 helical membrane passes run 23 to 43 (VTFA…IFGY), 87 to 107 (AFTS…GPIT), 121 to 141 (ISFL…MLLL), 144 to 164 (IMLG…LSEM), 173 to 193 (LNIM…MVNY), 205 to 225 (LSLG…LLLP), 286 to 306 (LVMA…IILF), 322 to 342 (ALYS…ISIA), 351 to 371 (FLLI…AIIL), 384 to 404 (SFSV…GWSW), 430 to 450 (AVNL…LCAF), and 453 to 473 (GIFL…YIFL). The Cytoplasmic portion of the chain corresponds to 474–522 (PETKGVPIEEMIFLWRKHWFWKKIVPGQPEVDDSRESMEMGEAVASRIK).

This sequence belongs to the major facilitator superfamily. Sugar transporter (TC 2.A.1.1) family.

It is found in the membrane. This is Sugar carrier protein A (STA) from Ricinus communis (Castor bean).